The chain runs to 263 residues: Endonuclease 8 (263 aa).

Pro2 functions as the Schiff-base intermediate with DNA in the catalytic mechanism. The active-site Proton donor is the Glu3. Lys53 functions as the Proton donor; for beta-elimination activity in the catalytic mechanism. Residues Gln70, Arg125, and Asn169 each coordinate DNA. The segment at 229–263 (KLFHRDGEACERCGGIIEKTTLSSRPFYWCPHCQK) adopts an FPG-type zinc-finger fold. The active-site Proton donor; for delta-elimination activity is Arg253.

Belongs to the FPG family. The cofactor is Zn(2+).

It catalyses the reaction 2'-deoxyribonucleotide-(2'-deoxyribose 5'-phosphate)-2'-deoxyribonucleotide-DNA = a 3'-end 2'-deoxyribonucleotide-(2,3-dehydro-2,3-deoxyribose 5'-phosphate)-DNA + a 5'-end 5'-phospho-2'-deoxyribonucleoside-DNA + H(+). Functionally, involved in base excision repair of DNA damaged by oxidation or by mutagenic agents. Acts as a DNA glycosylase that recognizes and removes damaged bases. Has a preference for oxidized pyrimidines, such as thymine glycol, 5,6-dihydrouracil and 5,6-dihydrothymine. Has AP (apurinic/apyrimidinic) lyase activity and introduces nicks in the DNA strand. Cleaves the DNA backbone by beta-delta elimination to generate a single-strand break at the site of the removed base with both 3'- and 5'-phosphates. This is Endonuclease 8 from Salmonella typhimurium (strain SL1344).